Consider the following 420-residue polypeptide: Threonine aspartase 1 (420 aa).

Positions 1–25 (MIMEKGMNSGEGLPSRSSQASAAKV) are disordered. The active-site Nucleophile is the Thr234.

It belongs to the Ntn-hydrolase family. As to quaternary structure, intramolecular proteolysis generates 2 subunits, alpha and beta, which reassemble through a non-covalent association to form the fully active enzyme.

Its function is as follows. Protease responsible for KMT2A/MLL1 and KMT2D/MLL2 processing and activation. Through substrate activation, it controls the expression of HOXA genes, and the expression of key cell cycle regulators including CCNA1, CCNB1, CCNE1 and CDKN2A. The polypeptide is Threonine aspartase 1 (Tasp1) (Mus musculus (Mouse)).